Reading from the N-terminus, the 2758-residue chain is Highly reducing polyketide synthase NEC1 (2758 aa).

The Ketosynthase family 3 (KS3) domain maps to 153–492 (EASSPIIGLD…GSNAHVVMDD (340 aa)). A disordered region spans residues 512–576 (PRLPGSSSSR…NTDTLQTTDT (65 aa)). The span at 566-576 (TNTDTLQTTDT) shows a compositional bias: low complexity. The malonyl-CoA:ACP transacylase (MAT) domain stretch occupies residues 700–1044 (VFTGQGAQWP…GYATVLKRGD (345 aa)). The active-site For malonyltransferase activity is the S790. The tract at residues 1124–1255 (HELLGAPVPD…GFVRTEYSQT (132 aa)) is N-terminal hotdog fold. The dehydratase (DH) domain stretch occupies residues 1124–1442 (HELLGAPVPD…VFKTIPNTAS (319 aa)). Residues 1124 to 1443 (HELLGAPVPD…FKTIPNTASS (320 aa)) enclose the PKS/mFAS DH domain. Catalysis depends on H1156, which acts as the Proton acceptor; for dehydratase activity. The segment at 1283 to 1443 (TSMVHADKVY…FKTIPNTASS (161 aa)) is C-terminal hotdog fold. D1351 (proton donor; for dehydratase activity) is an active-site residue. A methyltransferase (CMet) domain region spans residues 1622–1727 (LEVGGGTGGA…RKLLKPGGKL (106 aa)). The interval 2031-2344 (GTADVCFSED…LGKGEDAVVL (314 aa)) is enoyl reductase (ER) domain. A ketoreductase (KR) domain region spans residues 2372–2553 (ASYMVVGGLG…PVAVSLDLPV (182 aa)). A Carrier domain is found at 2673 to 2750 (EAQAVVLDAL…ALAAAVAGRS (78 aa)). S2710 carries the post-translational modification O-(pantetheine 4'-phosphoryl)serine.

Functionally, highly reducing polyketide synthase; part of the gene cluster that mediates the biosynthesis of nectriapyrone and its analogs phomopyrone A, acropyrone and zaepyrone. The nectriapyrone biosynthetic gene cluster consists of two genes, the highly reducing polyketide synthase NEC1 that produces a demethylated analog of nectriapyrone from one unit of acetyl-CoA and one unit of malonyl-CoA; and the O-methyltransferase NEC2 that further methylates the NEC1 product to yield nectriapyrone. Nectriapyrone is further hydrolyzed to nectriapyrone D, also known as gulypyrone B, by an unidentified hydrolase localized outside the nectriapyrone cluster. The chain is Highly reducing polyketide synthase NEC1 from Pyricularia oryzae (strain 70-15 / ATCC MYA-4617 / FGSC 8958) (Rice blast fungus).